The sequence spans 345 residues: NADH-quinone oxidoreductase subunit H (345 aa).

A run of 8 helical transmembrane segments spans residues 14–34 (IILA…LFLV), 84–104 (FILA…VIPF), 115–135 (VAIL…IMGG), 161–181 (IGLI…GDIV), 187–207 (GWGF…LFFI), 248–268 (YIAI…GWLS), 277–297 (VLWM…VKAI), and 309–329 (LGWK…AFAA).

This sequence belongs to the complex I subunit 1 family. In terms of assembly, NDH-1 is composed of 14 different subunits. Subunits NuoA, H, J, K, L, M, N constitute the membrane sector of the complex.

It localises to the cell inner membrane. The catalysed reaction is a quinone + NADH + 5 H(+)(in) = a quinol + NAD(+) + 4 H(+)(out). NDH-1 shuttles electrons from NADH, via FMN and iron-sulfur (Fe-S) centers, to quinones in the respiratory chain. The immediate electron acceptor for the enzyme in this species is believed to be ubiquinone. Couples the redox reaction to proton translocation (for every two electrons transferred, four hydrogen ions are translocated across the cytoplasmic membrane), and thus conserves the redox energy in a proton gradient. This subunit may bind ubiquinone. The polypeptide is NADH-quinone oxidoreductase subunit H (Ruegeria pomeroyi (strain ATCC 700808 / DSM 15171 / DSS-3) (Silicibacter pomeroyi)).